The chain runs to 505 residues: L-carnitine/gamma-butyrobetaine antiporter (505 aa).

12 consecutive transmembrane segments (helical) span residues 10–30 (IEPK…WLTV), 51–71 (WGWA…WLVF), 92–112 (IFMM…SIEI), 143–163 (GPLP…FFFV), 195–215 (FYLV…TPLV), 231–251 (LDAI…ACGL), 263–283 (SYLS…SFIM), 316–336 (WTVF…IFLA), 347–367 (LCFG…TVLG), 403–423 (LSTA…VTLI), 446–466 (LLVR…LLAL), and 475–495 (AIIA…LSFI).

Belongs to the BCCT transporter (TC 2.A.15) family. CaiT subfamily. Homotrimer.

It localises to the cell inner membrane. It catalyses the reaction 4-(trimethylamino)butanoate(in) + (R)-carnitine(out) = 4-(trimethylamino)butanoate(out) + (R)-carnitine(in). It functions in the pathway amine and polyamine metabolism; carnitine metabolism. In terms of biological role, catalyzes the exchange of L-carnitine for gamma-butyrobetaine. The protein is L-carnitine/gamma-butyrobetaine antiporter of Salmonella agona (strain SL483).